A 909-amino-acid polypeptide reads, in one-letter code: Coatomer subunit beta'-3 (909 aa).

WD repeat units lie at residues 13–52 (QRSE…ITKS), 55–94 (VTEL…KVKV), 97–136 (AHSD…ACTQ), 140–180 (GHSH…PNFT), 183–224 (AHQK…CVQT), 227–266 (GHTH…LENT), 269–309 (YGLE…ASMD), 351–390 (TCDL…RSFG), and 461–501 (QIDV…SHFD). Positions 862-909 (EENGHVENEGDEEEQQEEEVNEEEGVVDADSTDGAVLVNGSEVLTPHP) are disordered. Positions 870–892 (EGDEEEQQEEEVNEEEGVVDADS) are enriched in acidic residues.

Belongs to the WD repeat COPB2 family. As to quaternary structure, oligomeric complex that consists of at least the alpha, beta, beta', gamma, delta, epsilon and zeta subunits.

Its subcellular location is the cytoplasm. The protein resides in the golgi apparatus membrane. It is found in the cytoplasmic vesicle. It localises to the COPI-coated vesicle membrane. The coatomer is a cytosolic protein complex that binds to dilysine motifs and reversibly associates with Golgi non-clathrin-coated vesicles, which further mediate biosynthetic protein transport from the ER, via the Golgi up to the trans Golgi network. Coatomer complex is required for budding from Golgi membranes, and is essential for the retrograde Golgi-to-ER transport of dilysine-tagged proteins. The chain is Coatomer subunit beta'-3 from Arabidopsis thaliana (Mouse-ear cress).